A 71-amino-acid chain; its full sequence is Sec-independent protein translocase protein TatA (71 aa).

The chain crosses the membrane as a helical span at residues 9 to 29; the sequence is LLLILAIVVILFGASRLPALG. A disordered region spans residues 43-71; the sequence is FGGEDEKPTASGNGSTPTQSSSDQGSKQA. Residues 52-71 show a composition bias toward polar residues; sequence ASGNGSTPTQSSSDQGSKQA.

The protein belongs to the TatA/E family. The Tat system comprises two distinct complexes: a TatABC complex, containing multiple copies of TatA, TatB and TatC subunits, and a separate TatA complex, containing only TatA subunits. Substrates initially bind to the TatABC complex, which probably triggers association of the separate TatA complex to form the active translocon.

It is found in the cell inner membrane. In terms of biological role, part of the twin-arginine translocation (Tat) system that transports large folded proteins containing a characteristic twin-arginine motif in their signal peptide across membranes. TatA could form the protein-conducting channel of the Tat system. The protein is Sec-independent protein translocase protein TatA of Anaeromyxobacter dehalogenans (strain 2CP-C).